A 538-amino-acid chain; its full sequence is Chaperonin GroEL 2 (538 aa).

ATP contacts are provided by residues Thr-29 to Pro-32, Asp-86 to Thr-90, Gly-412, Asn-479 to Ala-481, and Asp-495.

The protein belongs to the chaperonin (HSP60) family. Forms a cylinder of 14 subunits composed of two heptameric rings stacked back-to-back. Interacts with the co-chaperonin GroES.

The protein resides in the cytoplasm. The enzyme catalyses ATP + H2O + a folded polypeptide = ADP + phosphate + an unfolded polypeptide.. Functionally, together with its co-chaperonin GroES, plays an essential role in assisting protein folding. The GroEL-GroES system forms a nano-cage that allows encapsulation of the non-native substrate proteins and provides a physical environment optimized to promote and accelerate protein folding. The protein is Chaperonin GroEL 2 of Renibacterium salmoninarum (strain ATCC 33209 / DSM 20767 / JCM 11484 / NBRC 15589 / NCIMB 2235).